Consider the following 610-residue polypeptide: Alpha-fetoprotein (610 aa).

Residues 1-18 (MKWVVSIFLIVLLNFTES) form the signal peptide. 3 consecutive Albumin domains span residues 19–210 (RTMH…ASIT), 211–403 (KELR…EELE), and 404–602 (KYIQ…ALIS). Histidine 22 lines the Cu(2+) pocket. Intrachain disulfides connect cysteine 99-cysteine 114, cysteine 113-cysteine 124, cysteine 148-cysteine 193, cysteine 192-cysteine 201, cysteine 224-cysteine 270, cysteine 269-cysteine 277, cysteine 289-cysteine 303, and cysteine 302-cysteine 314. Phosphoserine occurs at positions 111, 115, and 117. The N-linked (GlcNAc...) asparagine glycan is linked to asparagine 251. Serine 345 bears the Phosphoserine mark. 7 disulfide bridges follow: cysteine 385–cysteine 394, cysteine 417–cysteine 463, cysteine 462–cysteine 473, cysteine 486–cysteine 502, cysteine 501–cysteine 512, cysteine 539–cysteine 584, and cysteine 583–cysteine 592.

Belongs to the ALB/AFP/VDB family. In terms of assembly, dimeric and trimeric forms have been found in addition to the monomeric form. Plasma. Synthesized by the fetal liver and yolk sac.

It localises to the secreted. Its function is as follows. Binds copper, nickel, and fatty acids as well as, and bilirubin less well than, serum albumin. This Sus scrofa (Pig) protein is Alpha-fetoprotein (AFP).